A 254-amino-acid polypeptide reads, in one-letter code: Sec-independent protein translocase protein TatCy (254 aa).

6 helical membrane passes run 24–44, 67–87, 112–132, 157–177, 187–207, and 212–232; these read IVALAFVVFFIAGFFLAKPII, LYVFMQFAFIIGIVLTSPVIL, VSILLFLAGLSFSYYILFPFV, FLLQLTIPFGLLFQMPVILMF, MFLAKIRKYAYFTLLVIAALI, and LLSHMMVTVPLLILYEISILI.

The protein belongs to the TatC family. As to quaternary structure, forms a complex with TatAy. Two types of complexes exist: one composed of TatAy and TatCy, and another composed only of TatAy.

It localises to the cell membrane. Functionally, part of the twin-arginine translocation (Tat) system that transports large folded proteins containing a characteristic twin-arginine motif in their signal peptide across membranes. Required for YwbN secretion. In Bacillus subtilis (strain 168), this protein is Sec-independent protein translocase protein TatCy.